The primary structure comprises 483 residues: MAAFTPITIAYGDGIGPEIMEAVLYILRKAEARISLETIEVGEKLYKKHYTSGISEESWDVIQRTGIILKAPITTPQSGGYKSLNVTIRKTLQLFANIRPVVSFYPFTRTLHPNLNLTIIRENEEDLYSGVEYRQTHNMYESMKLISHTGCKKIIRYAFEYAIKNNRKKVTCLTKDNIMKFSDGIFHRVFNEIAKEYPQINNEHYIIDIGTAKLATKPEIFDIIVTSNLYGDIISDVAAEISGSVGLAGSANIGQHYAMFEAVHGSAPDIAGKGIANPSGLLNAAIMMLVHIGQGDIASLIENAWKKTIEDGVHTFDIYNEHSSSKKVCTKEFAVEVIKRLGQLPITLPKAAYPLIVKKQESNIDYKIDTREVKKLVGTDIFINMHVFSAHDIADKINKLDIGNFELKTISSKGLKLWPHDSRFEIISDHWCCRFMNKDGTEIKHLDITMLLQSLSKANIDFIKVENLFEFDGVAWYSLAQGE.

Residue Thr-74 coordinates NADP(+). Residues Ser-83, Asn-85, Arg-89, Arg-99, and Arg-121 each contribute to the D-threo-isocitrate site. Asp-232 serves as a coordination point for Mg(2+). NADP(+)-binding positions include 264–270 (HGSAPDI) and Asn-277.

It belongs to the isocitrate and isopropylmalate dehydrogenases family. In terms of assembly, homodimer. Mg(2+) serves as cofactor. It depends on Mn(2+) as a cofactor.

It catalyses the reaction D-threo-isocitrate + NADP(+) = 2-oxoglutarate + CO2 + NADPH. Functionally, catalyzes the oxidative decarboxylation of isocitrate to 2-oxoglutarate and carbon dioxide with the concomitant reduction of NADP(+). The sequence is that of Isocitrate dehydrogenase [NADP] (icd) from Rickettsia prowazekii (strain Madrid E).